We begin with the raw amino-acid sequence, 588 residues long: MITRLSTLFLRTLREDPADAEVPSHKLLVRAGYIRRVAPGVYSWLPLGLRALRNIEQVVREEMDAIGGQELLFPGLLPREPYETTQRWTEYGDSLFRLKDRKGADYLLGPTHEEMFASTVKDLYSSYKDFPVTLYQIQTKYRDEERPRAGILRGREFVMKDSYSFDMTDAGLEESYARHRAAYQRIFDRLGIEYVICKATSGAMGGSASEEFLAVSANGEDTFVRATDGDFAANVEAVVTQPGQERPIEGLPEAVVHETPVSETIETLVAWANSIGVTVDGREVQASDTLKCIVVKTREPGAEEWELTGVLVPGDREVDMKRLEASLEPAEVELAVEADFAKYPFLVKGYVGPVGLARNGVRVLADPRVVTGTSWITGADEKERHVVGLVAGRDFTPDGFIEAAEIREGDPAPEGQGTLTLARGIEIGHIFQLGRKYTEAFDVQILDENGKRAIPTMGSYGIGVSRLLAVLAEQRHDEAGLNWSPAVAPYQVHVVAANKDAAAIEAAERYATELSQAGIDVLFDDRPKVSPGVKFKDAELLGMPFALILGRGYADGTVELRVRGGEKTELPVDEAVETIVRLVNEARG.

Belongs to the class-II aminoacyl-tRNA synthetase family. ProS type 1 subfamily. As to quaternary structure, homodimer.

Its subcellular location is the cytoplasm. The enzyme catalyses tRNA(Pro) + L-proline + ATP = L-prolyl-tRNA(Pro) + AMP + diphosphate. Its function is as follows. Catalyzes the attachment of proline to tRNA(Pro) in a two-step reaction: proline is first activated by ATP to form Pro-AMP and then transferred to the acceptor end of tRNA(Pro). As ProRS can inadvertently accommodate and process non-cognate amino acids such as alanine and cysteine, to avoid such errors it has two additional distinct editing activities against alanine. One activity is designated as 'pretransfer' editing and involves the tRNA(Pro)-independent hydrolysis of activated Ala-AMP. The other activity is designated 'posttransfer' editing and involves deacylation of mischarged Ala-tRNA(Pro). The misacylated Cys-tRNA(Pro) is not edited by ProRS. This chain is Proline--tRNA ligase, found in Corynebacterium efficiens (strain DSM 44549 / YS-314 / AJ 12310 / JCM 11189 / NBRC 100395).